A 79-amino-acid polypeptide reads, in one-letter code: Acyl carrier protein (79 aa).

A Carrier domain is found at 2 to 79 (ASKEEILAGL…QDAVDFIXGA (78 aa)). Serine 40 carries the post-translational modification O-(pantetheine 4'-phosphoryl)serine.

The protein belongs to the acyl carrier protein (ACP) family. In terms of processing, 4'-phosphopantetheine is transferred from CoA to a specific serine of apo-ACP by AcpS. This modification is essential for activity because fatty acids are bound in thioester linkage to the sulfhydryl of the prosthetic group.

Its subcellular location is the cytoplasm. It functions in the pathway lipid metabolism; fatty acid biosynthesis. Functionally, carrier of the growing fatty acid chain in fatty acid biosynthesis. The sequence is that of Acyl carrier protein from Myxococcus xanthus.